The primary structure comprises 146 residues: Negative cofactor 2 complex subunit beta (146 aa).

The disordered stretch occupies residues 124-146 (FRQSRSRLHHNSVSDPVKSEDSS). A phosphoserine mark is found at S135, S137, and S142.

As to quaternary structure, component of the NC2 (negative cofactor 2) complex composed of BUR6 and NCB2. The NC2 complex associates with SPT15/TBP. Interacts with SPT15/TBP.

The protein localises to the nucleus. Functionally, component of the NC2 complex which represses RNA polymerase II transcription through binding to SPT15/TBP and thereby inhibiting the assembly of the preinitiation complex. The NC2 complex may also mediate transcriptional activation from TATA-driven promoters through association with SPT15/TBP. This Saccharomyces cerevisiae (strain ATCC 204508 / S288c) (Baker's yeast) protein is Negative cofactor 2 complex subunit beta (NCB2).